The sequence spans 1076 residues: Regulator of G-protein signaling protein-like (1076 aa).

An RGS domain is found at Asn645–Glu764. A compositionally biased stretch (polar residues) spans Thr834 to Ser852. The segment at Thr834–Asp854 is disordered. The chain crosses the membrane as a helical span at residues Val960 to Trp982.

It is found in the membrane. In Homo sapiens (Human), this protein is Regulator of G-protein signaling protein-like (RGSL1).